We begin with the raw amino-acid sequence, 241 residues long: MQHTSRDHLSYNFKTTAPHPPVEWKISDGLVEYPEALRYMQKRVENIYAKIAHEQVWLLEHPSLYTAGTSANKNDLLIPHVFPVYEAGRGGEFTYHGPGQRIAYIMLDLKRRKQDIRAFISALEQWIIQTLAQFNIKGERREDRIGVWVVRPDRPSIISGIPAEDKIAAIGIRVRKWISFHGISINVDTDLTHYSGIVPCGITNHGVTSLLDLGLPITIHDVDNALKKAFEQIFGPTIDVS.

Residues 50 to 238 enclose the BPL/LPL catalytic domain; that stretch reads KIAHEQVWLL…AFEQIFGPTI (189 aa). Substrate contacts are provided by residues 89–96, 169–171, and 182–184; these read RGGEFTYH, AIG, and GIS. Cys200 serves as the catalytic Acyl-thioester intermediate.

It belongs to the LipB family.

The protein localises to the cytoplasm. It catalyses the reaction octanoyl-[ACP] + L-lysyl-[protein] = N(6)-octanoyl-L-lysyl-[protein] + holo-[ACP] + H(+). It participates in protein modification; protein lipoylation via endogenous pathway; protein N(6)-(lipoyl)lysine from octanoyl-[acyl-carrier-protein]: step 1/2. Its function is as follows. Catalyzes the transfer of endogenously produced octanoic acid from octanoyl-acyl-carrier-protein onto the lipoyl domains of lipoate-dependent enzymes. Lipoyl-ACP can also act as a substrate although octanoyl-ACP is likely to be the physiological substrate. The polypeptide is Octanoyltransferase (Bartonella bacilliformis (strain ATCC 35685 / KC583 / Herrer 020/F12,63)).